Reading from the N-terminus, the 314-residue chain is GTPase Era (314 aa).

The Era-type G domain maps to K21–P189. The interval G29 to S36 is G1. Position 29–36 (G29–S36) interacts with GTP. A G2 region spans residues Q55–N59. The tract at residues D76 to G79 is G3. Residues D76 to I80 and N138 to D141 each bind GTP. The segment at N138–D141 is G4. The interval F168–A170 is G5. Positions I212–P296 constitute a KH type-2 domain.

Belongs to the TRAFAC class TrmE-Era-EngA-EngB-Septin-like GTPase superfamily. Era GTPase family. In terms of assembly, monomer.

It is found in the cytoplasm. Its subcellular location is the cell inner membrane. Functionally, an essential GTPase that binds both GDP and GTP, with rapid nucleotide exchange. Plays a role in 16S rRNA processing and 30S ribosomal subunit biogenesis and possibly also in cell cycle regulation and energy metabolism. In Rippkaea orientalis (strain PCC 8801 / RF-1) (Cyanothece sp. (strain PCC 8801)), this protein is GTPase Era.